We begin with the raw amino-acid sequence, 84 residues long: U8-theraphotoxin-Hhn1e (84 aa).

An N-terminal signal peptide occupies residues 1–21 (MKVVLLVCLVWMMAMMELVSC). Disulfide bonds link C23-C35, C29-C44, C34-C67, C54-C75, and C69-C81.

Belongs to the AVIT (prokineticin) family. As to expression, expressed by the venom gland.

It localises to the secreted. This is U8-theraphotoxin-Hhn1e from Cyriopagopus hainanus (Chinese bird spider).